The primary structure comprises 283 residues: Phospholipid phosphatase 1 (283 aa).

The Cytoplasmic segment spans residues 1–6; it reads MFDKTR. A PDZ-binding; involved in localization to the apical cell membrane motif is present at residues 5–7; that stretch reads TRL. Residues 7-27 traverse the membrane as a helical segment; sequence LPYVALDVICVLLAGLPFAIL. Over 28-53 the chain is Extracellular; that stretch reads TSRHTPFQRGIFCNDDSIKYPYKEDT. The helical transmembrane segment at 54-74 threads the bilayer; that stretch reads IPYALLGGIVIPFCIIVMSIG. Topologically, residues 75-88 are cytoplasmic; that stretch reads ESLSVYFNVLHSNS. Residues 89–109 form a helical membrane-spanning segment; sequence FVGNPYIATIYKAVGAFLFGV. Residues 110 to 164 lie on the Extracellular side of the membrane; the sequence is SASQSLTDIAKYTIGSLRPHFLAICNPDWSKINCSDGYIEDYICQGNEEKVKEGR. Residues 120-128 form a phosphatase sequence motif I region; that stretch reads KYTIGSLRP. Residue Asn142 is glycosylated (N-linked (GlcNAc...) asparagine). Residues 165 to 185 form a helical membrane-spanning segment; the sequence is LSFYSGHSSFSMYCMLFVALY. The interval 168–171 is phosphatase sequence motif II; it reads YSGH. Residue His171 is the Proton donors of the active site. At 186-199 the chain is on the cytoplasmic side; that stretch reads LQARMKGDWARLLR. Residues 200-220 traverse the membrane as a helical segment; sequence PMLQFGLIAFSIYVGLSRVSD. The tract at residues 216-227 is phosphatase sequence motif III; the sequence is SRVSDYKHHWSD. Residues 221-229 lie on the Extracellular side of the membrane; it reads YKHHWSDVT. His223 serves as the catalytic Nucleophile. The helical transmembrane segment at 230–250 threads the bilayer; sequence VGLIQGAAMAILVALYVSDFF. Residues 251–283 lie on the Cytoplasmic side of the membrane; the sequence is KDTHSYKERKEEDPHTTLHETASSRNYSTNHEP. The disordered stretch occupies residues 260-283; the sequence is KEEDPHTTLHETASSRNYSTNHEP. Residues 269–283 are compositionally biased toward polar residues; sequence HETASSRNYSTNHEP.

Belongs to the PA-phosphatase related phosphoesterase family. Forms functional homodimers and homooligomers that are not required for substrate recognition and catalytic activity. Can also form heterooligomers with PLPP2 and PLPP3. In terms of processing, N-glycosylated. N-linked sugars are of the complex type. N-glycosylation is not required for the phosphatase activity. Widely expressed. Highly expressed in kidney and lung. Almost undetectable in brain, heart, bone, muscle or spleen.

Its subcellular location is the cell membrane. It localises to the apical cell membrane. It is found in the membrane raft. The protein resides in the membrane. The protein localises to the caveola. It carries out the reaction a 1,2-diacyl-sn-glycero-3-phosphate + H2O = a 1,2-diacyl-sn-glycerol + phosphate. The catalysed reaction is 1,2-dihexadecanoyl-sn-glycero-3-phosphate + H2O = 1,2-dihexadecanoyl-sn-glycerol + phosphate. It catalyses the reaction 1,2-di-(9Z-octadecenoyl)-sn-glycero-3-phosphate + H2O = 1,2-di-(9Z-octadecenoyl)-sn-glycerol + phosphate. The enzyme catalyses a monoacyl-sn-glycero-3-phosphate + H2O = a monoacylglycerol + phosphate. It carries out the reaction (9Z)-octadecenoyl-sn-glycero-3-phosphate + H2O = (9Z-octadecenoyl)-glycerol + phosphate. The catalysed reaction is a 1-acyl-sn-glycero-3-phosphate + H2O = a 1-acyl-sn-glycerol + phosphate. It catalyses the reaction 1-(9Z-octadecenoyl)-sn-glycero-3-phosphate + H2O = 1-(9Z-octadecenoyl)-sn-glycerol + phosphate. The enzyme catalyses a 1,2-diacyl-sn-glycerol 3-diphosphate + H2O = a 1,2-diacyl-sn-glycero-3-phosphate + phosphate + H(+). It carries out the reaction sphing-4-enine 1-phosphate + H2O = sphing-4-enine + phosphate. The catalysed reaction is an N-acylsphing-4-enine 1-phosphate + H2O = an N-acylsphing-4-enine + phosphate. It catalyses the reaction N-(octanoyl)-sphing-4-enine-1-phosphate + H2O = N-octanoylsphing-4-enine + phosphate. The enzyme catalyses N-(9Z-octadecenoyl)-ethanolamine phosphate + H2O = N-(9Z-octadecenoyl) ethanolamine + phosphate. It carries out the reaction 1-hexadecanoyl-2-(9Z-octadecenoyl)-sn-glycero-3-phosphate + H2O = 1-hexadecanoyl-2-(9Z-octadecenoyl)-sn-glycerol + phosphate. It functions in the pathway lipid metabolism; phospholipid metabolism. Magnesium-independent phospholipid phosphatase. Insensitive to N-ethylmaleimide. In terms of biological role, magnesium-independent phospholipid phosphatase of the plasma membrane that catalyzes the dephosphorylation of a variety of glycerolipid and sphingolipid phosphate esters including phosphatidate/PA, lysophosphatidate/LPA, diacylglycerol pyrophosphate/DGPP, sphingosine 1-phosphate/S1P and ceramide 1-phosphate/C1P. Also acts on N-oleoyl ethanolamine phosphate/N-(9Z-octadecenoyl)-ethanolamine phosphate, a potential physiological compound. Through its extracellular phosphatase activity allows both the hydrolysis and the cellular uptake of these bioactive lipid mediators from the milieu, regulating signal transduction in different cellular processes. It is for instance essential for the extracellular hydrolysis of S1P and subsequent conversion into intracellular S1P. Involved in the regulation of inflammation, platelets activation, cell proliferation and migration among other processes. May also have an intracellular activity to regulate phospholipid-mediated signaling pathways. The polypeptide is Phospholipid phosphatase 1 (Mus musculus (Mouse)).